The primary structure comprises 420 residues: Pre-mRNA-splicing factor RBM22 (420 aa).

The segment at 159-186 (RNRPHICSFWVKGECKRGEECPYRHEKP) adopts a C3H1-type zinc-finger fold. Positions 232 to 305 (TTLYVGGLGD…RRLNVKWGRS (74 aa)) constitute an RRM domain. Disordered regions lie at residues 303–343 (GRSQ…AAEE) and 372–420 (APPP…HSSP). Over residues 309–318 (RGKEKDKEGT) the composition is skewed to basic and acidic residues.

Belongs to the SLT11 family. In terms of assembly, component of the pre-catalytic and catalytic spliceosome complexes. Component of the postcatalytic spliceosome P complex.

Its subcellular location is the nucleus. It is found in the cytoplasm. In terms of biological role, required for pre-mRNA splicing as component of the activated spliceosome. Involved in the first step of pre-mRNA splicing. Binds directly to the internal stem-loop (ISL) domain of the U6 snRNA and to the pre-mRNA intron near the 5' splice site during the activation and catalytic phases of the spliceosome cycle. The chain is Pre-mRNA-splicing factor RBM22 (RBM22) from Gallus gallus (Chicken).